The chain runs to 115 residues: Transmembrane protein 218 (115 aa).

3 helical membrane-spanning segments follow: residues 5 to 25, 38 to 58, and 81 to 101; these read VLGV…VLLL, FSIV…LLFP, and YVLL…LLTH.

This sequence belongs to the TMEM218 family. In terms of assembly, interacts with TMEM67.

The protein localises to the membrane. It is found in the cell projection. Its subcellular location is the cilium. May be involved in ciliary biogenesis or function. In Mus musculus (Mouse), this protein is Transmembrane protein 218 (Tmem218).